The chain runs to 158 residues: NAD(P)H-quinone oxidoreductase subunit J, chloroplastic (158 aa).

The protein belongs to the complex I 30 kDa subunit family. NDH is composed of at least 16 different subunits, 5 of which are encoded in the nucleus.

It localises to the plastid. Its subcellular location is the chloroplast thylakoid membrane. The enzyme catalyses a plastoquinone + NADH + (n+1) H(+)(in) = a plastoquinol + NAD(+) + n H(+)(out). It catalyses the reaction a plastoquinone + NADPH + (n+1) H(+)(in) = a plastoquinol + NADP(+) + n H(+)(out). NDH shuttles electrons from NAD(P)H:plastoquinone, via FMN and iron-sulfur (Fe-S) centers, to quinones in the photosynthetic chain and possibly in a chloroplast respiratory chain. The immediate electron acceptor for the enzyme in this species is believed to be plastoquinone. Couples the redox reaction to proton translocation, and thus conserves the redox energy in a proton gradient. The protein is NAD(P)H-quinone oxidoreductase subunit J, chloroplastic of Guizotia abyssinica (Niger).